The primary structure comprises 120 residues: Large ribosomal subunit protein uL18 (120 aa).

It belongs to the universal ribosomal protein uL18 family. Part of the 50S ribosomal subunit; part of the 5S rRNA/L5/L18/L25 subcomplex. Contacts the 5S and 23S rRNAs.

In terms of biological role, this is one of the proteins that bind and probably mediate the attachment of the 5S RNA into the large ribosomal subunit, where it forms part of the central protuberance. The protein is Large ribosomal subunit protein uL18 of Staphylococcus haemolyticus (strain JCSC1435).